A 488-amino-acid chain; its full sequence is Bifunctional protein NifU/MnmA (488 aa).

The tract at residues 1–130 is nifU-like protein; that stretch reads MPERYGPRVI…DYWSRQGDAL (130 aa). The segment at 143 to 488 is tRNA-specific 2-thiouridylase MnmA; that stretch reads RRGVVAAMSG…GGGIIARRDA (346 aa). Residues 149-156 and Phe-175 each bind ATP; that span reads AMSGGVDS. The active-site Nucleophile is the Cys-240. Cys-240 and Cys-333 are disulfide-bonded. Gly-264 contacts ATP. The interval 283–285 is interaction with tRNA; the sequence is KDQ. Residue Cys-333 is the Cysteine persulfide intermediate of the active site. The interval 433–434 is interaction with tRNA; that stretch reads RY.

The protein in the N-terminal section; belongs to the NifU family. This sequence in the C-terminal section; belongs to the MnmA/TRMU family.

It localises to the cytoplasm. It catalyses the reaction S-sulfanyl-L-cysteinyl-[protein] + uridine(34) in tRNA + AH2 + ATP = 2-thiouridine(34) in tRNA + L-cysteinyl-[protein] + A + AMP + diphosphate + H(+). Functionally, may be involved in the formation or repair of [Fe-S] clusters present in iron-sulfur proteins. In terms of biological role, catalyzes the 2-thiolation of uridine at the wobble position (U34) of tRNA, leading to the formation of s(2)U34. The sequence is that of Bifunctional protein NifU/MnmA (nifU/mnmA) from Rubrobacter xylanophilus (strain DSM 9941 / JCM 11954 / NBRC 16129 / PRD-1).